The sequence spans 198 residues: Elongation factor Ts (198 aa).

Residues 81–84 are involved in Mg(2+) ion dislocation from EF-Tu; sequence TDFV.

This sequence belongs to the EF-Ts family.

The protein localises to the cytoplasm. Functionally, associates with the EF-Tu.GDP complex and induces the exchange of GDP to GTP. It remains bound to the aminoacyl-tRNA.EF-Tu.GTP complex up to the GTP hydrolysis stage on the ribosome. In Pseudothermotoga lettingae (strain ATCC BAA-301 / DSM 14385 / NBRC 107922 / TMO) (Thermotoga lettingae), this protein is Elongation factor Ts.